Consider the following 963-residue polypeptide: Protein bicaudal C homolog 1-A (963 aa).

Positions 1–48 are disordered; sequence MAAQCESIGGDMNQSDPGSNSERSADSPVPGSEDDSPHDPEWREERFR. Positions 12–22 are enriched in polar residues; that stretch reads MNQSDPGSNSE. The segment covering 35-48 has biased composition (basic and acidic residues); the sequence is DSPHDPEWREERFR. 2 KH domains span residues 128–195 and 280–344; these read RVTL…RVRI and PVST…RQYL. Residues 592 to 601 show a composition bias toward polar residues; sequence EASRQSNNHS. Disordered regions lie at residues 592–613, 668–713, and 767–834; these read EASR…TDPE, ERLL…TSQS, and LRRA…NKSA. Basic and acidic residues-rich tracts occupy residues 602–612 and 683–696; these read SAEEVNSKTDP and VTDK…RAAE. Low complexity predominate over residues 784–797; sequence ENSSLSRSNSREQL. Residues 812–824 are compositionally biased toward polar residues; that stretch reads IDSSQNDYSSSIG. Residues 862 to 925 enclose the SAM domain; it reads FKGSDLPELF…LLAISELNKN (64 aa).

This sequence belongs to the BicC family.

In terms of biological role, putative RNA-binding protein. May be involved in regulating gene expression during embryonic development. Seems to be involved in endoderm formation. Ectopic expression results in endoderm formation in the absence of mesoderm induction. The sequence is that of Protein bicaudal C homolog 1-A (bicc1-a) from Xenopus laevis (African clawed frog).